A 289-amino-acid polypeptide reads, in one-letter code: Ribosome-inactivating protein alpha-trichosanthin (289 aa).

Residues 1–23 form the signal peptide; that stretch reads MIRFLVLSLLILTLFLTTPAVEG. E183 is an active-site residue. The propeptide at 271–289 is removed in mature form; sequence AMDDDVPMTQSFGCGSYAI.

The protein belongs to the ribosome-inactivating protein family. Type 1 RIP subfamily.

The catalysed reaction is Endohydrolysis of the N-glycosidic bond at one specific adenosine on the 28S rRNA.. Its function is as follows. Inactivates eukaryotic 60S ribosomal subunits. This chain is Ribosome-inactivating protein alpha-trichosanthin, found in Trichosanthes kirilowii (Chinese snake gourd).